The chain runs to 382 residues: uncharacterized protein (382 aa).

The next 12 helical transmembrane spans lie at 14 to 34, 45 to 65, 79 to 99, 102 to 122, 131 to 151, 157 to 177, 204 to 224, 235 to 255, 270 to 290, 291 to 311, 325 to 345, and 348 to 368; these read GLLL…LWLA, VVSS…GYVI, FIFA…SWLA, FVAG…LMCS, LLAA…LLVS, LMSV…PLLF, LGVN…GLMP, ASIG…QWPI, VQVF…AMAP, ALFI…AWAC, ALLL…AMLM, and FSDN…LLML.

The protein belongs to the major facilitator superfamily. YcaD (TC 2.A.1.26) family.

The protein resides in the cell inner membrane. This is an uncharacterized protein from Shigella sonnei (strain Ss046).